A 146-amino-acid polypeptide reads, in one-letter code: Small ribosomal subunit protein uS13 (146 aa).

A disordered region spans residues 119–146; the sequence is ARGKKVRGQRTRSTGRKGRTVGVVRRKR.

This sequence belongs to the universal ribosomal protein uS13 family. Part of the 30S ribosomal subunit. Forms a loose heterodimer with protein S19. Forms two bridges to the 50S subunit in the 70S ribosome.

Functionally, located at the top of the head of the 30S subunit, it contacts several helices of the 16S rRNA. In the 70S ribosome it contacts the 23S rRNA (bridge B1a) and protein L5 of the 50S subunit (bridge B1b), connecting the 2 subunits; these bridges are implicated in subunit movement. In Archaeoglobus fulgidus (strain ATCC 49558 / DSM 4304 / JCM 9628 / NBRC 100126 / VC-16), this protein is Small ribosomal subunit protein uS13.